The chain runs to 137 residues: Large-conductance mechanosensitive channel (137 aa).

Topologically, residues 1-16 are cytoplasmic; it reads MSIIKEFREFAMRGNV. Residues 17–45 traverse the membrane as a helical segment; the sequence is VDLAVGVIIGALFGKIVSSLVSDIIMPPL. Topologically, residues 46-74 are periplasmic; that stretch reads GLLIGGVDFKQFALFLRNAQGGIPAVVMN. A helical transmembrane segment spans residues 75–94; it reads YGAFIQNIFDFIIVAFAIFI. Residues 95–137 are Cytoplasmic-facing; the sequence is AIKLMNKMRCKQEDTPAAPPKPSAEEKLLAEIRDLLKEQQTRQ.

Belongs to the MscL family. Homopentamer.

It is found in the cell inner membrane. In terms of biological role, channel that opens in response to stretch forces in the membrane lipid bilayer. Forms a nonselective ion channel with a conductance of about 4 nanosiemens. May participate in the regulation of osmotic pressure changes within the cell. This Pectobacterium carotovorum (Erwinia carotovora) protein is Large-conductance mechanosensitive channel.